The sequence spans 517 residues: Glycerol kinase 5 (517 aa).

Positions 23 and 24 each coordinate ATP. Glycerol contacts are provided by Arg93, Asp270, and Gln271. Thr292, Gly335, and Gly432 together coordinate ATP.

The protein belongs to the FGGY kinase family.

It is found in the cytoplasm. The enzyme catalyses glycerol + ATP = sn-glycerol 3-phosphate + ADP + H(+). The protein operates within polyol metabolism; glycerol degradation via glycerol kinase pathway; sn-glycerol 3-phosphate from glycerol: step 1/1. Functionally, skin-specific kinase that plays a key role in glycerol metabolism, catalyzing its phosphorylation to produce sn-glycerol 3-phosphate. Involved in skin-specific regulation of sterol regulatory element-binding protein (SREBP) processing and lipid biosynthesis. The sequence is that of Glycerol kinase 5 (GK5) from Gallus gallus (Chicken).